Consider the following 136-residue polypeptide: Large ribosomal subunit protein eL27 (136 aa).

A KOW domain is found at methionine 5–histidine 40. An N6-acetyllysine mark is found at lysine 27 and lysine 93.

Belongs to the eukaryotic ribosomal protein eL27 family. In terms of assembly, component of the large ribosomal subunit. Interacts with RRP1B. Component of the large ribosomal subunit. Interacts with RRP1B. Interacts with DHX33.

Its subcellular location is the cytoplasm. It localises to the cytosol. The protein resides in the rough endoplasmic reticulum. Component of the large ribosomal subunit. Required for proper rRNA processing and maturation of 28S and 5.8S rRNAs. This is Large ribosomal subunit protein eL27 (RPL27) from Bos taurus (Bovine).